The following is a 246-amino-acid chain: UPF0736 protein GK0808 (246 aa).

The protein belongs to the UPF0736 family.

This is UPF0736 protein GK0808 from Geobacillus kaustophilus (strain HTA426).